The sequence spans 399 residues: Phosphoglycerate kinase (399 aa).

Residues 22–24 (DFN), Arg38, 61–64 (HLGR), Arg120, and Arg153 contribute to the substrate site. Residues Lys204, Glu326, and 352 to 355 (GGDT) each bind ATP.

Belongs to the phosphoglycerate kinase family. Monomer.

The protein resides in the cytoplasm. It carries out the reaction (2R)-3-phosphoglycerate + ATP = (2R)-3-phospho-glyceroyl phosphate + ADP. It functions in the pathway carbohydrate degradation; glycolysis; pyruvate from D-glyceraldehyde 3-phosphate: step 2/5. The sequence is that of Phosphoglycerate kinase from Geotalea uraniireducens (strain Rf4) (Geobacter uraniireducens).